Reading from the N-terminus, the 364-residue chain is Histidinol-phosphate aminotransferase (364 aa).

N6-(pyridoxal phosphate)lysine is present on Lys-226.

It belongs to the class-II pyridoxal-phosphate-dependent aminotransferase family. Histidinol-phosphate aminotransferase subfamily. In terms of assembly, homodimer. The cofactor is pyridoxal 5'-phosphate.

It carries out the reaction L-histidinol phosphate + 2-oxoglutarate = 3-(imidazol-4-yl)-2-oxopropyl phosphate + L-glutamate. It functions in the pathway amino-acid biosynthesis; L-histidine biosynthesis; L-histidine from 5-phospho-alpha-D-ribose 1-diphosphate: step 7/9. The chain is Histidinol-phosphate aminotransferase from Campylobacter jejuni (strain RM1221).